Here is a 342-residue protein sequence, read N- to C-terminus: Succinylglutamate desuccinylase (342 aa).

Positions 63, 66, and 155 each coordinate Zn(2+). The active site involves glutamate 219.

The protein belongs to the AspA/AstE family. Succinylglutamate desuccinylase subfamily. It depends on Zn(2+) as a cofactor.

The enzyme catalyses N-succinyl-L-glutamate + H2O = L-glutamate + succinate. The protein operates within amino-acid degradation; L-arginine degradation via AST pathway; L-glutamate and succinate from L-arginine: step 5/5. Its function is as follows. Transforms N(2)-succinylglutamate into succinate and glutamate. This is Succinylglutamate desuccinylase from Vibrio vulnificus (strain YJ016).